We begin with the raw amino-acid sequence, 206 residues long: Histidine biosynthesis bifunctional protein HisIE (206 aa).

The phosphoribosyl-AMP cyclohydrolase stretch occupies residues 1–117 (MGSETTAAGD…SCFPTAPSQF (117 aa)). A phosphoribosyl-ATP pyrophosphohydrolase region spans residues 118–206 (LGSLDALIAE…AVALLESRHK (89 aa)).

It in the N-terminal section; belongs to the PRA-CH family. This sequence in the C-terminal section; belongs to the PRA-PH family.

It localises to the cytoplasm. The enzyme catalyses 1-(5-phospho-beta-D-ribosyl)-ATP + H2O = 1-(5-phospho-beta-D-ribosyl)-5'-AMP + diphosphate + H(+). It carries out the reaction 1-(5-phospho-beta-D-ribosyl)-5'-AMP + H2O = 1-(5-phospho-beta-D-ribosyl)-5-[(5-phospho-beta-D-ribosylamino)methylideneamino]imidazole-4-carboxamide. Its pathway is amino-acid biosynthesis; L-histidine biosynthesis; L-histidine from 5-phospho-alpha-D-ribose 1-diphosphate: step 2/9. The protein operates within amino-acid biosynthesis; L-histidine biosynthesis; L-histidine from 5-phospho-alpha-D-ribose 1-diphosphate: step 3/9. This is Histidine biosynthesis bifunctional protein HisIE from Xanthomonas campestris pv. campestris (strain ATCC 33913 / DSM 3586 / NCPPB 528 / LMG 568 / P 25).